The sequence spans 323 residues: Protoheme IX farnesyltransferase (323 aa).

9 consecutive transmembrane segments (helical) span residues 28–48, 50–70, 99–119, 122–142, 150–170, 178–198, 223–243, 244–264, and 279–299; these read IIPL…NGQV, PVLL…AQTL, HALI…VVFV, ASAL…THML, IVIG…AVTG, ALFA…ALMI, IWIY…PLAA, SGIV…YKTW, and LFKY…VDSL.

This sequence belongs to the UbiA prenyltransferase family. Protoheme IX farnesyltransferase subfamily.

It localises to the cell inner membrane. The enzyme catalyses heme b + (2E,6E)-farnesyl diphosphate + H2O = Fe(II)-heme o + diphosphate. Its pathway is porphyrin-containing compound metabolism; heme O biosynthesis; heme O from protoheme: step 1/1. Its function is as follows. Converts heme B (protoheme IX) to heme O by substitution of the vinyl group on carbon 2 of heme B porphyrin ring with a hydroxyethyl farnesyl side group. The protein is Protoheme IX farnesyltransferase of Gloeothece citriformis (strain PCC 7424) (Cyanothece sp. (strain PCC 7424)).